The following is a 242-amino-acid chain: Biosynthetic peptidoglycan transglycosylase (242 aa).

Residues 19–39 form a helical membrane-spanning segment; it reads LMVVLAIFWGGGIALFSVAPV.

It belongs to the glycosyltransferase 51 family.

The protein localises to the cell inner membrane. It catalyses the reaction [GlcNAc-(1-&gt;4)-Mur2Ac(oyl-L-Ala-gamma-D-Glu-L-Lys-D-Ala-D-Ala)](n)-di-trans,octa-cis-undecaprenyl diphosphate + beta-D-GlcNAc-(1-&gt;4)-Mur2Ac(oyl-L-Ala-gamma-D-Glu-L-Lys-D-Ala-D-Ala)-di-trans,octa-cis-undecaprenyl diphosphate = [GlcNAc-(1-&gt;4)-Mur2Ac(oyl-L-Ala-gamma-D-Glu-L-Lys-D-Ala-D-Ala)](n+1)-di-trans,octa-cis-undecaprenyl diphosphate + di-trans,octa-cis-undecaprenyl diphosphate + H(+). Its pathway is cell wall biogenesis; peptidoglycan biosynthesis. Its function is as follows. Peptidoglycan polymerase that catalyzes glycan chain elongation from lipid-linked precursors. In Escherichia coli O127:H6 (strain E2348/69 / EPEC), this protein is Biosynthetic peptidoglycan transglycosylase.